A 402-amino-acid chain; its full sequence is Olfactomedin-like protein 1 (402 aa).

An N-terminal signal peptide occupies residues 1 to 28 (MMVALPGASASLVLFLAAFLPPLQHAQD). N66 is a glycosylation site (N-linked (GlcNAc...) asparagine). Positions 73–135 (RCQTHTNEYR…EAEEEKKIRT (63 aa)) form a coiled coil. N138 and N183 each carry an N-linked (GlcNAc...) asparagine glycan. The 258-residue stretch at 140 to 397 (SCDNMLMAIK…QIIYKLQTKK (258 aa)) folds into the Olfactomedin-like domain. Residues C141 and C324 are joined by a disulfide bond.

Highly N-glycosylated.

Its subcellular location is the secreted. The polypeptide is Olfactomedin-like protein 1 (Olfml1) (Rattus norvegicus (Rat)).